The sequence spans 871 residues: DNA mismatch repair protein MutS (871 aa).

Residue 618 to 625 (GPNMSGKS) coordinates ATP.

This sequence belongs to the DNA mismatch repair MutS family.

Functionally, this protein is involved in the repair of mismatches in DNA. It is possible that it carries out the mismatch recognition step. This protein has a weak ATPase activity. In Christiangramia forsetii (strain DSM 17595 / CGMCC 1.15422 / KT0803) (Gramella forsetii), this protein is DNA mismatch repair protein MutS.